Reading from the N-terminus, the 243-residue chain is MNSEKIFYDILNVAAENVDLEFNDKKYNQFIQYKDLLKDWNGKVNLTAITEDEEIIKKHFIDSMKIFQFEYLRKANKIIDIGTGGGFPGIPMKIMRPDADIVLLDSLKKRINVLDDILNKIGINDVETIHGRAEEFAKNPKYREKFDAVVSRAVANLASLSEFCLPYVKVGGYFVALKGPAVDEEVKIAKKAISILGGKLEEIREVEIEDSDLKHNLVIIKKIKNTPKQYPRKPGTATKKPLI.

S-adenosyl-L-methionine contacts are provided by residues Gly82, Phe87, 133-134 (AE), and Arg152.

This sequence belongs to the methyltransferase superfamily. RNA methyltransferase RsmG family.

The protein resides in the cytoplasm. Specifically methylates the N7 position of a guanine in 16S rRNA. The polypeptide is Ribosomal RNA small subunit methyltransferase G (Clostridium novyi (strain NT)).